We begin with the raw amino-acid sequence, 67 residues long: MEGISLAKLLIVGALIVLLFGTKKLRSLGGDLGSAIKGFKKAMNDDSDATSKTASEDKNAGQAVHKE.

The helical transmembrane segment at 1–21 (MEGISLAKLLIVGALIVLLFG) threads the bilayer. Residues 43–67 (MNDDSDATSKTASEDKNAGQAVHKE) form a disordered region. Positions 54–67 (ASEDKNAGQAVHKE) are enriched in basic and acidic residues.

Belongs to the TatA/E family. TatE subfamily.

It localises to the cell inner membrane. Functionally, part of the twin-arginine translocation (Tat) system that transports large folded proteins containing a characteristic twin-arginine motif in their signal peptide across membranes. TatE shares overlapping functions with TatA. In Erwinia tasmaniensis (strain DSM 17950 / CFBP 7177 / CIP 109463 / NCPPB 4357 / Et1/99), this protein is Probable Sec-independent protein translocase protein TatE.